The sequence spans 375 residues: 23S rRNA (uracil(747)-C(5))-methyltransferase RlmC (375 aa).

[4Fe-4S] cluster contacts are provided by cysteine 3, cysteine 11, cysteine 14, and cysteine 87. S-adenosyl-L-methionine-binding residues include glutamine 212, phenylalanine 241, glutamate 262, and asparagine 307. The active-site Nucleophile is the cysteine 334.

Belongs to the class I-like SAM-binding methyltransferase superfamily. RNA M5U methyltransferase family. RlmC subfamily.

The catalysed reaction is uridine(747) in 23S rRNA + S-adenosyl-L-methionine = 5-methyluridine(747) in 23S rRNA + S-adenosyl-L-homocysteine + H(+). Catalyzes the formation of 5-methyl-uridine at position 747 (m5U747) in 23S rRNA. In Shigella sonnei (strain Ss046), this protein is 23S rRNA (uracil(747)-C(5))-methyltransferase RlmC.